A 541-amino-acid polypeptide reads, in one-letter code: Putative apolipoprotein N-acyltransferase (541 aa).

6 consecutive transmembrane segments (helical) span residues 31-51, 65-85, 89-109, 144-164, 181-201, and 215-235; these read PLPAWSLAPVQVIALAVAAHA, GWLFAMFSFSLGLYWLYVSMH, GLAAPLAAAGVLALSAFLALF, AACWAALEWLRAVVLTGFPWL, LLGVHGMALLAAFAAAALAGL, and LAAGVALLLAGAGWLLGQFSW. In terms of domain architecture, CN hydrolase spans 248–511; it reads VQGNVEQSQK…AGVLPVAVQG (264 aa). The active-site Proton acceptor is the glutamate 292. The active site involves lysine 366. Residue cysteine 416 is the Nucleophile of the active site.

This sequence belongs to the CN hydrolase family. Apolipoprotein N-acyltransferase subfamily.

It localises to the cell inner membrane. The enzyme catalyses N-terminal S-1,2-diacyl-sn-glyceryl-L-cysteinyl-[lipoprotein] + a glycerophospholipid = N-acyl-S-1,2-diacyl-sn-glyceryl-L-cysteinyl-[lipoprotein] + a 2-acyl-sn-glycero-3-phospholipid + H(+). The protein operates within protein modification; lipoprotein biosynthesis (N-acyl transfer). Its function is as follows. Catalyzes the phospholipid dependent N-acylation of the N-terminal cysteine of apolipoprotein, the last step in lipoprotein maturation. The polypeptide is Putative apolipoprotein N-acyltransferase (Bordetella parapertussis (strain 12822 / ATCC BAA-587 / NCTC 13253)).